The primary structure comprises 310 residues: Flavin-dependent trigonelline monooxygenase, reductase component (310 aa).

FMN is bound by residues 40–43 (TANS), 57–63 (SIAKTSS), 90–91 (FA), and Arg97.

The protein belongs to the non-flavoprotein flavin reductase family. Homodimer. The trigonelline monooxygenase is composed of a reductase component TgnA and an oxygenase component TgnB.

It carries out the reaction a reduced flavin + NAD(+) = an oxidized flavin + NADH + 2 H(+). It catalyses the reaction FADH2 + NAD(+) = FAD + NADH + 2 H(+). The enzyme catalyses FMNH2 + NAD(+) = FMN + NADH + 2 H(+). Maximal reductase activity is achieved only upon trigonelline (TG) binding to the reductase component before interaction with NADH. It seems that TgnA undergoes an allosteric transition upon trigonelline (TG) binding accounting for the positive cooperativity toward NADH oxidation. Involved in the degradation of the pyridine ring of trigonelline (TG; N-methylnicotinate) into succinate and methylamine as carbon and nitrogen sources, respectively. TgnA catalyzes the reduction of flavin (FMN or FAD) by NADH and supplies the reduced flavin to the oxygenase component TgnB. The polypeptide is Flavin-dependent trigonelline monooxygenase, reductase component (Acinetobacter baylyi (strain ATCC 33305 / BD413 / ADP1)).